Here is a 213-residue protein sequence, read N- to C-terminus: Serine acetyltransferase (213 aa).

This sequence belongs to the transferase hexapeptide repeat family.

It is found in the cytoplasm. The catalysed reaction is L-serine + acetyl-CoA = O-acetyl-L-serine + CoA. It functions in the pathway amino-acid biosynthesis; L-cysteine biosynthesis; L-cysteine from L-serine: step 1/2. The chain is Serine acetyltransferase (cysE) from Staphylococcus aureus (strain COL).